Reading from the N-terminus, the 199-residue chain is Dephospho-CoA kinase (199 aa).

The 197-residue stretch at 3–199 folds into the DPCK domain; that stretch reads KVGLTGGICS…DLLEFFTLYQ (197 aa). 11-16 contributes to the ATP binding site; that stretch reads CSGKST.

The protein belongs to the CoaE family.

It is found in the cytoplasm. It catalyses the reaction 3'-dephospho-CoA + ATP = ADP + CoA + H(+). The protein operates within cofactor biosynthesis; coenzyme A biosynthesis; CoA from (R)-pantothenate: step 5/5. Functionally, catalyzes the phosphorylation of the 3'-hydroxyl group of dephosphocoenzyme A to form coenzyme A. The polypeptide is Dephospho-CoA kinase (Clostridium perfringens (strain 13 / Type A)).